The primary structure comprises 235 residues: Small ribosomal subunit protein eS4 (235 aa).

In terms of domain architecture, S4 RNA-binding spans 38 to 101 (IPLLVLVRDF…EKSYRILFDE (64 aa)).

It belongs to the eukaryotic ribosomal protein eS4 family.

The sequence is that of Small ribosomal subunit protein eS4 (rps4e) from Archaeoglobus fulgidus (strain ATCC 49558 / DSM 4304 / JCM 9628 / NBRC 100126 / VC-16).